Reading from the N-terminus, the 318-residue chain is 3'-5' exoribonuclease YhaM (318 aa).

The HD domain occupies 163–279 (HVVSMLDLAK…LHYIDNLDAK (117 aa)).

This sequence belongs to the YhaM family.

Shows a 3'-5' exoribonuclease activity. The protein is 3'-5' exoribonuclease YhaM of Bacillus cytotoxicus (strain DSM 22905 / CIP 110041 / 391-98 / NVH 391-98).